Consider the following 276-residue polypeptide: Lipoyl synthase (276 aa).

[4Fe-4S] cluster contacts are provided by cysteine 27, cysteine 32, cysteine 38, cysteine 53, cysteine 57, cysteine 60, and serine 266. The 217-residue stretch at 39–255 folds into the Radical SAM core domain; it reads FGNKTATFMI…EEIGYEMGFK (217 aa).

It belongs to the radical SAM superfamily. Lipoyl synthase family. [4Fe-4S] cluster serves as cofactor.

It is found in the cytoplasm. It carries out the reaction [[Fe-S] cluster scaffold protein carrying a second [4Fe-4S](2+) cluster] + N(6)-octanoyl-L-lysyl-[protein] + 2 oxidized [2Fe-2S]-[ferredoxin] + 2 S-adenosyl-L-methionine + 4 H(+) = [[Fe-S] cluster scaffold protein] + N(6)-[(R)-dihydrolipoyl]-L-lysyl-[protein] + 4 Fe(3+) + 2 hydrogen sulfide + 2 5'-deoxyadenosine + 2 L-methionine + 2 reduced [2Fe-2S]-[ferredoxin]. It participates in protein modification; protein lipoylation via endogenous pathway; protein N(6)-(lipoyl)lysine from octanoyl-[acyl-carrier-protein]: step 2/2. Functionally, catalyzes the radical-mediated insertion of two sulfur atoms into the C-6 and C-8 positions of the octanoyl moiety bound to the lipoyl domains of lipoate-dependent enzymes, thereby converting the octanoylated domains into lipoylated derivatives. This chain is Lipoyl synthase, found in Aquifex aeolicus (strain VF5).